The following is a 693-amino-acid chain: Elongation factor G (693 aa).

In terms of domain architecture, tr-type G spans 8-282 (EKFRNFGIMA…AVVDYLPSPI (275 aa)). GTP is bound by residues 17–24 (AHIDAGKT), 81–85 (DTPGH), and 135–138 (NKMD).

Belongs to the TRAFAC class translation factor GTPase superfamily. Classic translation factor GTPase family. EF-G/EF-2 subfamily.

The protein resides in the cytoplasm. In terms of biological role, catalyzes the GTP-dependent ribosomal translocation step during translation elongation. During this step, the ribosome changes from the pre-translocational (PRE) to the post-translocational (POST) state as the newly formed A-site-bound peptidyl-tRNA and P-site-bound deacylated tRNA move to the P and E sites, respectively. Catalyzes the coordinated movement of the two tRNA molecules, the mRNA and conformational changes in the ribosome. The protein is Elongation factor G of Mycoplasmoides gallisepticum (strain R(low / passage 15 / clone 2)) (Mycoplasma gallisepticum).